The primary structure comprises 443 residues: Ribulose bisphosphate carboxylase large chain (443 aa).

Substrate is bound by residues Asn89 and Thr139. Lys141 functions as the Proton acceptor in the catalytic mechanism. Lys143 provides a ligand contact to substrate. The Mg(2+) site is built by Lys167, Asp169, and Glu170. Lys167 bears the N6-carboxylysine mark. His260 functions as the Proton acceptor in the catalytic mechanism. Arg261, His293, and Ser345 together coordinate substrate.

Belongs to the RuBisCO large chain family. Type I subfamily. In terms of assembly, heterohexadecamer of 8 large chains and 8 small chains; disulfide-linked. The disulfide link is formed within the large subunit homodimers. It depends on Mg(2+) as a cofactor. Post-translationally, the disulfide bond which can form in the large chain dimeric partners within the hexadecamer appears to be associated with oxidative stress and protein turnover.

Its subcellular location is the plastid. The protein localises to the chloroplast. The enzyme catalyses 2 (2R)-3-phosphoglycerate + 2 H(+) = D-ribulose 1,5-bisphosphate + CO2 + H2O. It carries out the reaction D-ribulose 1,5-bisphosphate + O2 = 2-phosphoglycolate + (2R)-3-phosphoglycerate + 2 H(+). RuBisCO catalyzes two reactions: the carboxylation of D-ribulose 1,5-bisphosphate, the primary event in carbon dioxide fixation, as well as the oxidative fragmentation of the pentose substrate in the photorespiration process. Both reactions occur simultaneously and in competition at the same active site. This Buddleja davidii (Butterfly bush) protein is Ribulose bisphosphate carboxylase large chain.